We begin with the raw amino-acid sequence, 310 residues long: Membrane protein insertase YidC 2 (310 aa).

A signal peptide spans 1-23 (MKKTLKRILFSSLSLSMLLLLTG). Residue Cys24 is the site of N-palmitoyl cysteine attachment. Cys24 is lipidated: S-diacylglycerol cysteine. 5 consecutive transmembrane segments (helical) span residues 33 to 53 (PYGV…TYFA), 58 to 78 (LGFG…ILPL), 135 to 155 (FGGI…AIFF), 180 to 200 (LTVI…QGVP), and 219 to 239 (VFMS…GGIF). Positions 266 to 310 (NPPKAYKANNARKDVTNSTKATESNQAIITSKKTNRNAGKQKRRG) are disordered. Residues 281-297 (TNSTKATESNQAIITSK) show a composition bias toward polar residues. Basic residues predominate over residues 298 to 310 (KTNRNAGKQKRRG).

Belongs to the OXA1/ALB3/YidC family. Type 2 subfamily.

It localises to the cell membrane. Its function is as follows. Required for the insertion and/or proper folding and/or complex formation of integral membrane proteins into the membrane. Involved in integration of membrane proteins that insert both dependently and independently of the Sec translocase complex, as well as at least some lipoproteins. The chain is Membrane protein insertase YidC 2 from Streptococcus agalactiae serotype V (strain ATCC BAA-611 / 2603 V/R).